Reading from the N-terminus, the 423-residue chain is UDP-N-acetylglucosamine 1-carboxyvinyltransferase 1 (423 aa).

Lysine 24–asparagine 25 lines the phosphoenolpyruvate pocket. Residue arginine 94 participates in UDP-N-acetyl-alpha-D-glucosamine binding. The active-site Proton donor is cysteine 118. 2-(S-cysteinyl)pyruvic acid O-phosphothioketal is present on cysteine 118. UDP-N-acetyl-alpha-D-glucosamine-binding positions include arginine 123–glutamine 127, aspartate 309, and isoleucine 331.

It belongs to the EPSP synthase family. MurA subfamily.

It is found in the cytoplasm. It carries out the reaction phosphoenolpyruvate + UDP-N-acetyl-alpha-D-glucosamine = UDP-N-acetyl-3-O-(1-carboxyvinyl)-alpha-D-glucosamine + phosphate. The protein operates within cell wall biogenesis; peptidoglycan biosynthesis. Cell wall formation. Adds enolpyruvyl to UDP-N-acetylglucosamine. The polypeptide is UDP-N-acetylglucosamine 1-carboxyvinyltransferase 1 (Staphylococcus haemolyticus (strain JCSC1435)).